The following is a 289-amino-acid chain: tRNA pseudouridine synthase B (289 aa).

D55 functions as the Nucleophile in the catalytic mechanism. A disordered region spans residues 243–289 (PGGVLAQHEREGSRALDSAAGNAEHDREEARIADNNREDRSRQHADR). Residues 265–289 (AEHDREEARIADNNREDRSRQHADR) show a composition bias toward basic and acidic residues.

This sequence belongs to the pseudouridine synthase TruB family. Type 1 subfamily.

It catalyses the reaction uridine(55) in tRNA = pseudouridine(55) in tRNA. In terms of biological role, responsible for synthesis of pseudouridine from uracil-55 in the psi GC loop of transfer RNAs. The polypeptide is tRNA pseudouridine synthase B (Chlorobium luteolum (strain DSM 273 / BCRC 81028 / 2530) (Pelodictyon luteolum)).